The chain runs to 441 residues: 4-hydroxybenzoate polyprenyltransferase, mitochondrial (441 aa).

The transit peptide at 1 to 95 (MLRKLTSNSS…TLGELVLRDY (95 aa)) directs the protein to the mitochondrion. Helical transmembrane passes span 129-149 (IGSW…APAG), 154-174 (LWTL…GCTI), 204-224 (AWFF…ELNW), 225-245 (YSIV…LMKR), 246-266 (ITHW…LLGW), 271-291 (GSVM…WTIV), 322-342 (LWLS…GMVC), and 378-398 (FISN…GTLY). Residues 405 to 441 (AGKSSTTSSSSTSSSSSPSSGLLLAATNHHQPARQAS) form a disordered region. Over residues 408 to 424 (SSTTSSSSTSSSSSPSS) the composition is skewed to low complexity. Positions 432–441 (NHHQPARQAS) are enriched in polar residues.

The protein belongs to the UbiA prenyltransferase family. Mg(2+) is required as a cofactor.

Its subcellular location is the mitochondrion inner membrane. The enzyme catalyses an all-trans-polyprenyl diphosphate + 4-hydroxybenzoate = a 4-hydroxy-3-(all-trans-polyprenyl)benzoate + diphosphate. The protein operates within cofactor biosynthesis; ubiquinone biosynthesis. Functionally, catalyzes the prenylation of para-hydroxybenzoate (PHB) with an all-trans polyprenyl group. Mediates the second step in the final reaction sequence of coenzyme Q (CoQ) biosynthesis, which is the condensation of the polyisoprenoid side chain with PHB, generating the first membrane-bound Q intermediate. The chain is 4-hydroxybenzoate polyprenyltransferase, mitochondrial from Aedes aegypti (Yellowfever mosquito).